Consider the following 471-residue polypeptide: Tetratricopeptide repeat protein 29 (471 aa).

TPR repeat units follow at residues 92–131 (DKLP…EAAE), 136–173 (YEEV…AQLI), 182–215 (AEAE…THGR), 234–267 (VRTY…AREG), 274–307 (GEAS…STSL), 314–347 (GRAY…ARNN), and 354–387 (IRAC…AMEL). The interval 449 to 471 (ATEDNIYQLPDAEEETRRSPENQ) is disordered.

Expressed in spermatozoa (at protein level).

Its subcellular location is the cytoplasm. It localises to the cytoskeleton. The protein resides in the flagellum axoneme. Its function is as follows. Axonemal protein which is implicated in axonemal and/or peri-axonemal structure assembly and regulates flagellum assembly and beating and therefore sperm motility. The sequence is that of Tetratricopeptide repeat protein 29 (Ttc29) from Mus musculus (Mouse).